Reading from the N-terminus, the 372-residue chain is NAD(P)H-quinone oxidoreductase subunit 1 (372 aa).

8 consecutive transmembrane segments (helical) span residues 27-47 (IIWL…GVLV), 97-117 (ILFT…WLIV), 128-148 (VGIG…GLLM), 176-196 (LALS…IDIV), 204-224 (ILSW…ICAL), 266-286 (ILSA…PVPV), 308-328 (SIGI…AILL), and 347-367 (FLLP…LAFP).

It belongs to the complex I subunit 1 family. NDH-1 is composed of at least 11 different subunits.

Its subcellular location is the cellular thylakoid membrane. It catalyses the reaction a plastoquinone + NADH + (n+1) H(+)(in) = a plastoquinol + NAD(+) + n H(+)(out). The enzyme catalyses a plastoquinone + NADPH + (n+1) H(+)(in) = a plastoquinol + NADP(+) + n H(+)(out). In terms of biological role, NDH-1 shuttles electrons from an unknown electron donor, via FMN and iron-sulfur (Fe-S) centers, to quinones in the respiratory and/or the photosynthetic chain. The immediate electron acceptor for the enzyme in this species is believed to be plastoquinone. Couples the redox reaction to proton translocation, and thus conserves the redox energy in a proton gradient. The polypeptide is NAD(P)H-quinone oxidoreductase subunit 1 (Prochlorococcus marinus (strain AS9601)).